Reading from the N-terminus, the 298-residue chain is tRNA-cytidine(32) 2-sulfurtransferase (298 aa).

Residues 1 to 26 (MTAVISLPDPPQRASRGPRVAGPGQD) are disordered. The PP-loop motif motif lies at 57–62 (SGGKDS). Residues Cys132, Cys135, and Cys223 each coordinate [4Fe-4S] cluster.

Belongs to the TtcA family. In terms of assembly, homodimer. It depends on Mg(2+) as a cofactor. Requires [4Fe-4S] cluster as cofactor.

Its subcellular location is the cytoplasm. It catalyses the reaction cytidine(32) in tRNA + S-sulfanyl-L-cysteinyl-[cysteine desulfurase] + AH2 + ATP = 2-thiocytidine(32) in tRNA + L-cysteinyl-[cysteine desulfurase] + A + AMP + diphosphate + H(+). The protein operates within tRNA modification. In terms of biological role, catalyzes the ATP-dependent 2-thiolation of cytidine in position 32 of tRNA, to form 2-thiocytidine (s(2)C32). The sulfur atoms are provided by the cysteine/cysteine desulfurase (IscS) system. This Stenotrophomonas maltophilia (strain R551-3) protein is tRNA-cytidine(32) 2-sulfurtransferase.